We begin with the raw amino-acid sequence, 245 residues long: Bis(5'-nucleosyl)-tetraphosphatase PrpE [asymmetrical] (245 aa).

This sequence belongs to the PrpE family. The cofactor is Ni(2+).

It carries out the reaction P(1),P(4)-bis(5'-guanosyl) tetraphosphate + H2O = GMP + GTP + 2 H(+). Functionally, asymmetrically hydrolyzes Ap4p to yield AMP and ATP. This chain is Bis(5'-nucleosyl)-tetraphosphatase PrpE [asymmetrical], found in Geobacillus thermodenitrificans (strain NG80-2).